Reading from the N-terminus, the 322-residue chain is Aspartate--ammonia ligase (322 aa).

It belongs to the class-II aminoacyl-tRNA synthetase family. AsnA subfamily.

It is found in the cytoplasm. The enzyme catalyses L-aspartate + NH4(+) + ATP = L-asparagine + AMP + diphosphate + H(+). It functions in the pathway amino-acid biosynthesis; L-asparagine biosynthesis; L-asparagine from L-aspartate (ammonia route): step 1/1. This Lactiplantibacillus plantarum (strain ATCC BAA-793 / NCIMB 8826 / WCFS1) (Lactobacillus plantarum) protein is Aspartate--ammonia ligase.